Consider the following 56-residue polypeptide: Mitoregulin (56 aa).

Over 2-9 (ADVSERTL) the chain is Mitochondrial matrix. Residues 10–27 (QVSVLVAFASGVVLGWQA) form a helical membrane-spanning segment. At 28–56 (NRLRRRYLDWRKRRLQDKLATTQKKLDLA) the chain is on the mitochondrial intermembrane side.

Belongs to the mitoregulin family. Interacts with mitochondrial trifunctional enzyme, a heterotetrameric complex composed of 2 HADHA subunits and 2 HADHB subunits. Interacts with cytochrome b5 reductase CYB5R3; the interaction is required to maintain cellular lipid composition and leads to stimulation of mitochondrial respiratory complex I activity. Interacts with ATP synthase subunit ATP5F1B/ATP5B. In terms of tissue distribution, enriched in heart and skeletal muscle (at protein level). Also enriched in adipose tissue with lower levels detected in liver, pancreas and brain (at protein level). Higher levels in differentiated myotubes than in satellite cells.

It localises to the mitochondrion inner membrane. Its function is as follows. Positively regulates mitochondrial complex assembly and/or stability. Increases mitochondrial membrane potential while decreasing mitochondrial reactive oxygen species. Increases mitochondrial respiration rate. Increased mitochondrial respiratory activity promotes myogenic differentiation which facilitates muscle growth and regeneration. Increases mitochondrial calcium retention capacity. Plays a role in maintenance of cellular lipid composition through its interaction with cytochrome b5 reductase CYB5R3 which is required for mitochondrial respiratory complex I activity. Interacts with the mitochondrial trifunctional enzyme complex (MTE) and enhances fatty acid beta-oxidation. Not required for MTE formation or stability. Modulates triglyceride clearance in adipocytes through its role in regulating fatty acid beta-oxidation and lipolysis. The sequence is that of Mitoregulin from Mus musculus (Mouse).